Reading from the N-terminus, the 353-residue chain is Photosystem II D2 protein (353 aa).

T2 is modified (N-acetylthreonine). The residue at position 2 (T2) is a Phosphothreonine. The helical transmembrane segment at 41-61 (CAYFALGGWFTGTTFVTSWYT) threads the bilayer. H118 lines the chlorophyll a pocket. Residues 125-141 (GFMLRQFELARSVQLRP) form a helical membrane-spanning segment. Pheophytin a contacts are provided by Q130 and N143. A helical membrane pass occupies residues 153–166 (VFVSVSLIYPLGQA). H198 contributes to the chlorophyll a binding site. Residues 208–228 (AALLCAIHGATVENTLFEDGD) traverse the membrane as a helical segment. 2 residues coordinate a plastoquinone: H215 and F262. Residue H215 participates in Fe cation binding. Residue H269 coordinates Fe cation. The chain crosses the membrane as a helical span at residues 279 to 295 (GLWMSAIGVVGLALNLR).

The protein belongs to the reaction center PufL/M/PsbA/D family. In terms of assembly, PSII is composed of 1 copy each of membrane proteins PsbA, PsbB, PsbC, PsbD, PsbE, PsbF, PsbH, PsbI, PsbJ, PsbK, PsbL, PsbM, PsbT, PsbX, PsbY, PsbZ, Psb30/Ycf12, at least 3 peripheral proteins of the oxygen-evolving complex and a large number of cofactors. It forms dimeric complexes. The cofactor is The D1/D2 heterodimer binds P680, chlorophylls that are the primary electron donor of PSII, and subsequent electron acceptors. It shares a non-heme iron and each subunit binds pheophytin, quinone, additional chlorophylls, carotenoids and lipids. There is also a Cl(-1) ion associated with D1 and D2, which is required for oxygen evolution. The PSII complex binds additional chlorophylls, carotenoids and specific lipids..

Its subcellular location is the plastid. It is found in the chloroplast thylakoid membrane. It carries out the reaction 2 a plastoquinone + 4 hnu + 2 H2O = 2 a plastoquinol + O2. Functionally, photosystem II (PSII) is a light-driven water:plastoquinone oxidoreductase that uses light energy to abstract electrons from H(2)O, generating O(2) and a proton gradient subsequently used for ATP formation. It consists of a core antenna complex that captures photons, and an electron transfer chain that converts photonic excitation into a charge separation. The D1/D2 (PsbA/PsbD) reaction center heterodimer binds P680, the primary electron donor of PSII as well as several subsequent electron acceptors. D2 is needed for assembly of a stable PSII complex. In Angiopteris evecta (Mule's foot fern), this protein is Photosystem II D2 protein.